The sequence spans 32 residues: Dermatoxin-J2 (32 aa).

Gln-32 carries the post-translational modification Glutamine amide.

In terms of tissue distribution, expressed by the skin glands.

The protein localises to the secreted. Functionally, antimicrobial peptide. The sequence is that of Dermatoxin-J2 from Phasmahyla jandaia (Jandaia leaf frog).